A 544-amino-acid chain; its full sequence is CTP synthase (544 aa).

Positions 1 to 265 (MTQYIFITGG…DDLVVKHFGL (265 aa)) are amidoligase domain. Position 13 (Ser13) interacts with CTP. Residue Ser13 participates in UTP binding. Residues 14 to 19 (SLGKGI) and Asp71 each bind ATP. The Mg(2+) site is built by Asp71 and Glu139. CTP is bound by residues 146 to 148 (DIE), 186 to 191 (KTKPTQ), and Lys222. Residues 186–191 (KTKPTQ) and Lys222 contribute to the UTP site. Residues 290 to 541 (TVAMVGKYVN…IAAALDYQTE (252 aa)) form the Glutamine amidotransferase type-1 domain. Gly351 lines the L-glutamine pocket. Cys378 functions as the Nucleophile; for glutamine hydrolysis in the catalytic mechanism. Residues 379–382 (LGLQ), Glu402, and Arg469 contribute to the L-glutamine site. Active-site residues include His514 and Glu516.

The protein belongs to the CTP synthase family. In terms of assembly, homotetramer.

The catalysed reaction is UTP + L-glutamine + ATP + H2O = CTP + L-glutamate + ADP + phosphate + 2 H(+). It carries out the reaction L-glutamine + H2O = L-glutamate + NH4(+). The enzyme catalyses UTP + NH4(+) + ATP = CTP + ADP + phosphate + 2 H(+). It participates in pyrimidine metabolism; CTP biosynthesis via de novo pathway; CTP from UDP: step 2/2. Its activity is regulated as follows. Allosterically activated by GTP, when glutamine is the substrate; GTP has no effect on the reaction when ammonia is the substrate. The allosteric effector GTP functions by stabilizing the protein conformation that binds the tetrahedral intermediate(s) formed during glutamine hydrolysis. Inhibited by the product CTP, via allosteric rather than competitive inhibition. Catalyzes the ATP-dependent amination of UTP to CTP with either L-glutamine or ammonia as the source of nitrogen. Regulates intracellular CTP levels through interactions with the four ribonucleotide triphosphates. In Dichelobacter nodosus (strain VCS1703A), this protein is CTP synthase.